Here is a 201-residue protein sequence, read N- to C-terminus: ATP-dependent Clp protease proteolytic subunit (201 aa).

Ser98 serves as the catalytic Nucleophile. His123 is a catalytic residue.

The protein belongs to the peptidase S14 family. Fourteen ClpP subunits assemble into 2 heptameric rings which stack back to back to give a disk-like structure with a central cavity, resembling the structure of eukaryotic proteasomes.

The protein localises to the cytoplasm. The enzyme catalyses Hydrolysis of proteins to small peptides in the presence of ATP and magnesium. alpha-casein is the usual test substrate. In the absence of ATP, only oligopeptides shorter than five residues are hydrolyzed (such as succinyl-Leu-Tyr-|-NHMec, and Leu-Tyr-Leu-|-Tyr-Trp, in which cleavage of the -Tyr-|-Leu- and -Tyr-|-Trp bonds also occurs).. Cleaves peptides in various proteins in a process that requires ATP hydrolysis. Has a chymotrypsin-like activity. Plays a major role in the degradation of misfolded proteins. This is ATP-dependent Clp protease proteolytic subunit from Rickettsia peacockii (strain Rustic).